We begin with the raw amino-acid sequence, 216 residues long: Probable transaldolase (216 aa).

The active-site Schiff-base intermediate with substrate is the Lys83.

Belongs to the transaldolase family. Type 3B subfamily.

It is found in the cytoplasm. It carries out the reaction D-sedoheptulose 7-phosphate + D-glyceraldehyde 3-phosphate = D-erythrose 4-phosphate + beta-D-fructose 6-phosphate. The protein operates within carbohydrate degradation; pentose phosphate pathway; D-glyceraldehyde 3-phosphate and beta-D-fructose 6-phosphate from D-ribose 5-phosphate and D-xylulose 5-phosphate (non-oxidative stage): step 2/3. Functionally, transaldolase is important for the balance of metabolites in the pentose-phosphate pathway. The polypeptide is Probable transaldolase (Sorangium cellulosum (strain So ce56) (Polyangium cellulosum (strain So ce56))).